The chain runs to 104 residues: NADH dehydrogenase [ubiquinone] 1 alpha subcomplex subunit 8 (104 aa).

CHCH domains are found at residues 17–59 and 60–102; these read WAVC…MREI and VKNC…VAPK. 4 short sequence motifs (cx9C motif) span residues 20–30, 41–51, 63–73, and 84–94; these read CGEVFEAYEKC, CLRESTAVVGC, CQKELNESVKC, and CEEENKAFNEC. 4 disulfide bridges follow: Cys-20–Cys-51, Cys-30–Cys-41, Cys-63–Cys-94, and Cys-73–Cys-84.

It belongs to the complex I NDUFA8 subunit family. In terms of assembly, complex I is composed of about 45 different subunits.

Its subcellular location is the mitochondrion inner membrane. The protein localises to the mitochondrion intermembrane space. In terms of biological role, accessory subunit of the mitochondrial membrane respiratory chain NADH dehydrogenase (Complex I), that is believed not to be involved in catalysis. Complex I functions in the transfer of electrons from NADH to the respiratory chain. The immediate electron acceptor for the enzyme is believed to be ubiquinone. In Dictyostelium discoideum (Social amoeba), this protein is NADH dehydrogenase [ubiquinone] 1 alpha subcomplex subunit 8 (ndufa8).